Consider the following 92-residue polypeptide: Small ribosomal subunit protein uS19 (92 aa).

This sequence belongs to the universal ribosomal protein uS19 family.

Its function is as follows. Protein S19 forms a complex with S13 that binds strongly to the 16S ribosomal RNA. The chain is Small ribosomal subunit protein uS19 from Rickettsia canadensis (strain McKiel).